The following is a 382-amino-acid chain: MKALHFGAGNIGRGFIGKLLADAGIQLTFADVNQVVLDALNARHSYQVHVVGENEQVDTVSGVNAVSSIGDDVVDLIAHVDLITTAVGPVVLERIAPAIAKGLVKRKAQGVDAPLNIIACENMVRGTTQLKGHVMNALADGDKAWVEQHVGFVDSAVDRIVPPSASATNDPLEVTVETFSEWIVDKTQFKGALPNIPGMELTDNLMAFVERKLFTLNTGHAITAYLGKLAGHQTIRDAILDEGIRAVVKGAMEESGAVLIKRYGFDADKHAAYIQKILGRFENPYLKDDVERVGRQPLRKLSAGDRLIKPLLGTLEYGLPHVNLVKGIAAAMHFRSDEDPQAQELAALITEKGPQAALAQISGLDANSDVVAEAVNAYNATK.

Residue 3–14 coordinates NAD(+); sequence ALHFGAGNIGRG.

The protein belongs to the mannitol dehydrogenase family.

The catalysed reaction is D-mannitol 1-phosphate + NAD(+) = beta-D-fructose 6-phosphate + NADH + H(+). This chain is Mannitol-1-phosphate 5-dehydrogenase, found in Salmonella typhi.